Here is a 173-residue protein sequence, read N- to C-terminus: Cytochrome b6-f complex subunit 4, chloroplastic (173 aa).

The transit peptide at 1 to 14 directs the protein to the chloroplast; the sequence is ESALERRSSSVVMN. Transmembrane regions (helical) follow at residues 49–69, 108–128, and 144–164; these read LLYM…GLAV, LLGV…PFIE, and SVFL…TLPI.

The protein belongs to the cytochrome b family. PetD subfamily. In terms of assembly, the 4 large subunits of the cytochrome b6-f complex are cytochrome b6, subunit IV (17 kDa polypeptide, petD), cytochrome f and the Rieske protein, while the 4 small subunits are petG, petL, petM and petN. The complex functions as a dimer.

It is found in the plastid. It localises to the chloroplast thylakoid membrane. In terms of biological role, component of the cytochrome b6-f complex, which mediates electron transfer between photosystem II (PSII) and photosystem I (PSI), cyclic electron flow around PSI, and state transitions. This Euglena gracilis protein is Cytochrome b6-f complex subunit 4, chloroplastic.